The sequence spans 38 residues: Large ribosomal subunit protein bL36 (38 aa).

This sequence belongs to the bacterial ribosomal protein bL36 family.

This is Large ribosomal subunit protein bL36 from Hahella chejuensis (strain KCTC 2396).